Reading from the N-terminus, the 245-residue chain is Phosphoadenosine 5'-phosphosulfate reductase (245 aa).

The Nucleophile; cysteine thiosulfonate intermediate role is filled by Cys239.

This sequence belongs to the PAPS reductase family. CysH subfamily.

Its subcellular location is the cytoplasm. It catalyses the reaction [thioredoxin]-disulfide + sulfite + adenosine 3',5'-bisphosphate + 2 H(+) = [thioredoxin]-dithiol + 3'-phosphoadenylyl sulfate. The protein operates within sulfur metabolism; hydrogen sulfide biosynthesis; sulfite from sulfate: step 3/3. In terms of biological role, catalyzes the formation of sulfite from phosphoadenosine 5'-phosphosulfate (PAPS) using thioredoxin as an electron donor. This chain is Phosphoadenosine 5'-phosphosulfate reductase, found in Alkalilimnicola ehrlichii (strain ATCC BAA-1101 / DSM 17681 / MLHE-1).